The following is a 477-amino-acid chain: MIRRLQDSGDLVRAFPRVHFVGIGGTGMSGIAEVMLTLGYEVSGSDNADNAATRRLAKLGARVMRGHSAANVLGTDCVVVSSAIREDNPELMEARSQRIPIMPRAAMLAELMRFRRGIAVAGTHGKTTTTSLAAAVLSEGGLDPTFVIGGQLLAAGANAKLGGGQWLVAEADESDGSFLRLNPLMAVITNIDADHLENYGNDFARVQAAFAEFLQRLPFYGLALLCIDDPEVAALAGKTPRHVMSYGMSENADVRAEDVVQDGPRMRFTLRLPEGTTTPVTLALPGRHNVLNALAAAAIGWQLGVAPDTIARALENFAGIGRRFNDLGEVTTSSGARVRVVDDYGHHPRELEAVFAAARGGWPDKRLVVAFQPHRYSRTRDQFDAFAAVLSTVDALVLSEVYPAGEAPIPGADSRALARAIRARGRSEPVVVGQIAGLAEVLPDVLQDGDLLLMMGAGDIGYVAQHIISNGFVGEQA.

122 to 128 (GTHGKTT) provides a ligand contact to ATP.

This sequence belongs to the MurCDEF family.

The protein resides in the cytoplasm. The enzyme catalyses UDP-N-acetyl-alpha-D-muramate + L-alanine + ATP = UDP-N-acetyl-alpha-D-muramoyl-L-alanine + ADP + phosphate + H(+). It functions in the pathway cell wall biogenesis; peptidoglycan biosynthesis. Its function is as follows. Cell wall formation. The polypeptide is UDP-N-acetylmuramate--L-alanine ligase (Xanthomonas euvesicatoria pv. vesicatoria (strain 85-10) (Xanthomonas campestris pv. vesicatoria)).